The sequence spans 80 residues: Exodeoxyribonuclease 7 small subunit (80 aa).

This sequence belongs to the XseB family. In terms of assembly, heterooligomer composed of large and small subunits.

It is found in the cytoplasm. The catalysed reaction is Exonucleolytic cleavage in either 5'- to 3'- or 3'- to 5'-direction to yield nucleoside 5'-phosphates.. Bidirectionally degrades single-stranded DNA into large acid-insoluble oligonucleotides, which are then degraded further into small acid-soluble oligonucleotides. This chain is Exodeoxyribonuclease 7 small subunit, found in Rickettsia massiliae (strain Mtu5).